The following is a 464-amino-acid chain: ATP synthase subunit beta (464 aa).

148-155 is an ATP binding site; it reads GGAGVGKT.

The protein belongs to the ATPase alpha/beta chains family. In terms of assembly, F-type ATPases have 2 components, CF(1) - the catalytic core - and CF(0) - the membrane proton channel. CF(1) has five subunits: alpha(3), beta(3), gamma(1), delta(1), epsilon(1). CF(0) has three main subunits: a(1), b(2) and c(9-12). The alpha and beta chains form an alternating ring which encloses part of the gamma chain. CF(1) is attached to CF(0) by a central stalk formed by the gamma and epsilon chains, while a peripheral stalk is formed by the delta and b chains.

Its subcellular location is the cell inner membrane. It catalyses the reaction ATP + H2O + 4 H(+)(in) = ADP + phosphate + 5 H(+)(out). Produces ATP from ADP in the presence of a proton gradient across the membrane. The catalytic sites are hosted primarily by the beta subunits. This Acinetobacter baumannii (strain AB0057) protein is ATP synthase subunit beta.